A 254-amino-acid polypeptide reads, in one-letter code: Triosephosphate isomerase (254 aa).

Asn-12–Lys-14 lines the substrate pocket. His-99 acts as the Electrophile in catalysis. The Proton acceptor role is filled by Glu-169. Substrate is bound by residues Gly-175, Ser-214, and Gly-235 to Gly-236.

Belongs to the triosephosphate isomerase family. In terms of assembly, homodimer.

It is found in the cytoplasm. The catalysed reaction is D-glyceraldehyde 3-phosphate = dihydroxyacetone phosphate. It participates in carbohydrate biosynthesis; gluconeogenesis. The protein operates within carbohydrate degradation; glycolysis; D-glyceraldehyde 3-phosphate from glycerone phosphate: step 1/1. In terms of biological role, involved in the gluconeogenesis. Catalyzes stereospecifically the conversion of dihydroxyacetone phosphate (DHAP) to D-glyceraldehyde-3-phosphate (G3P). The protein is Triosephosphate isomerase of Brucella melitensis biotype 1 (strain ATCC 23456 / CCUG 17765 / NCTC 10094 / 16M).